A 479-amino-acid polypeptide reads, in one-letter code: MESYDKVGSNKVPCLLILTCIIMSSFVNNNIVQAKVSWSLKAAEEAEAVANINCSGHGRAFLDGILSDGSPKCECNTCYTGADCSEKITGCSADVASGDGLFLEEYWQQHKENSAVLVSGWHRMSYFFNPVSNFISFELEKTIKELHEIVGNAAAKDRYIVFGVGVTQLIHGLVISLSPNMTATPCAPQSKVVAHAPYYPVFREQTKYFDKKGYEWKGNAADYVNTSTPEQFIEMVTSPNNPEGLLRHEVIKGCKSIYYMVYYWPHYTPIKYKADEDIMLFTMSKYTGHSGSRFGWALIKDETVYNKLLNYMTKNTEGTSRETQLRSLKILKEVIAMVKTQNGTMRDLNTFGFQKLRERWVNITALLDKSDRFSYQKLPQSEYCNYFRRMRPPSPSYAWVKCEWEEDKDCYQTFQNGRINTQSGEGFEAGSRYVRLSLIKTKDDFDQLMYYLKIMVEAKRKTPLIKQLSNDQISRRPFI.

An N-terminal signal peptide occupies residues 1-25 (MESYDKVGSNKVPCLLILTCIIMSS). Residues 26 to 34 (FVNNNIVQA) constitute a propeptide that is removed on maturation. The EGF-like; atypical domain maps to 47-93 (EAVANINCSGHGRAFLDGILSDGSPKCECNTCYTGADCSEKITGCSA). Asn-53 is a glycosylation site (N-linked (GlcNAc...) asparagine). Disulfide bonds link Cys-54/Cys-73, Cys-75/Cys-84, and Cys-78/Cys-91. 126–134 (YFFNPVSNF) is a binding site for chloride. Asn-180 and Asn-225 each carry an N-linked (GlcNAc...) asparagine glycan. Lys-285 is modified (N6-(pyridoxal phosphate)lysine). Residues Asn-342 and Asn-362 are each glycosylated (N-linked (GlcNAc...) asparagine). Residues Cys-402 and Cys-410 are joined by a disulfide bond.

It belongs to the alliinase family. Homodimer. Pyridoxal 5'-phosphate is required as a cofactor.

The protein localises to the vacuole. It catalyses the reaction an S-alkyl-L-cysteine S-oxide = an S-alkyl sulfenate + 2-aminoprop-2-enoate. The protein is Alliin lyase of Allium cepa (Onion).